Reading from the N-terminus, the 805-residue chain is Transducer protein BasT (805 aa).

The next 2 helical transmembrane spans lie at 25-45 (FNVL…YIHL) and 296-316 (NLAG…LTVG). HAMP domains are found at residues 317–370 (RRTS…TAAS) and 437–490 (ERLE…ATLA). A Methyl-accepting transducer domain is found at 509 to 745 (SAAEIRSASD…EVVTMIDEVT (237 aa)). The disordered stretch occupies residues 513–532 (IRSASDQVSESVQDISADAD). Positions 516–526 (ASDQVSESVQD) are enriched in polar residues. Residues Glu-554, Glu-736, and Glu-763 each carry the glutamate methyl ester (Glu) modification. The tract at residues 752 to 779 (ATESQQVSAAAEEQAASVSEVAGRADDL) is disordered. Positions 754–773 (ESQQVSAAAEEQAASVSEVA) are enriched in low complexity.

Belongs to the methyl-accepting chemotaxis (MCP) protein family. Interacts with CheA, CheY, CheW1 and CheW2. In terms of processing, methylated by CheR.

Its subcellular location is the cell membrane. Its function is as follows. Mediates chemotaxis towards five attractant amino acids (leucine, isoleucine, valine, methionine and cysteine). Probably transduces the signal from the substrate-binding protein BasB to the histidine kinase CheA. This Halobacterium salinarum (strain ATCC 29341 / DSM 671 / R1) protein is Transducer protein BasT (basT).